The following is a 358-amino-acid chain: Photosystem II protein D1 2 (358 aa).

3 helical membrane-spanning segments follow: residues 28 to 45 (YVGW…AATI), 117 to 132 (HFLI…QWEL), and 141 to 155 (WICV…AAMA). H117 contributes to the chlorophyll a binding site. Y125 provides a ligand contact to pheophytin a. [CaMn4O5] cluster contacts are provided by D169 and E188. A helical membrane pass occupies residues 196 to 217 (FHMLGVAGVFGGSLFSAMHGSL). H197 contributes to the chlorophyll a binding site. Residues H214 and 263–264 (SF) contribute to the a quinone site. H214 contacts Fe cation. H271 contributes to the Fe cation binding site. Residues 273–287 (FLGAWPVVGIWFTSM) form a helical membrane-spanning segment. Residues H331, E332, D341, and A343 each coordinate [CaMn4O5] cluster. A propeptide spanning residues 344–358 (TVESTPVALQAPAIG) is cleaved from the precursor.

Belongs to the reaction center PufL/M/PsbA/D family. In terms of assembly, PSII is composed of 1 copy each of membrane proteins PsbA, PsbB, PsbC, PsbD, PsbE, PsbF, PsbH, PsbI, PsbJ, PsbK, PsbL, PsbM, PsbT, PsbX, PsbY, PsbZ, Psb30/Ycf12, peripheral proteins PsbO, CyanoQ (PsbQ), PsbU, PsbV and a large number of cofactors. It forms dimeric complexes. It depends on The D1/D2 heterodimer binds P680, chlorophylls that are the primary electron donor of PSII, and subsequent electron acceptors. It shares a non-heme iron and each subunit binds pheophytin, quinone, additional chlorophylls, carotenoids and lipids. D1 provides most of the ligands for the Mn4-Ca-O5 cluster of the oxygen-evolving complex (OEC). There is also a Cl(-1) ion associated with D1 and D2, which is required for oxygen evolution. The PSII complex binds additional chlorophylls, carotenoids and specific lipids. as a cofactor. Post-translationally, tyr-160 forms a radical intermediate that is referred to as redox-active TyrZ, YZ or Y-Z. C-terminally processed by CtpA; processing is essential to allow assembly of the oxygen-evolving complex and thus photosynthetic growth.

It localises to the cellular thylakoid membrane. The catalysed reaction is 2 a plastoquinone + 4 hnu + 2 H2O = 2 a plastoquinol + O2. Photosystem II (PSII) is a light-driven water:plastoquinone oxidoreductase that uses light energy to abstract electrons from H(2)O, generating O(2) and a proton gradient subsequently used for ATP formation. It consists of a core antenna complex that captures photons, and an electron transfer chain that converts photonic excitation into a charge separation. The D1/D2 (PsbA/PsbD) reaction center heterodimer binds P680, the primary electron donor of PSII as well as several subsequent electron acceptors. The chain is Photosystem II protein D1 2 from Parasynechococcus marenigrum (strain WH8102).